Here is a 954-residue protein sequence, read N- to C-terminus: uncharacterized protein (954 aa).

Positions M1–C35 are cleaved as a signal peptide. Residues K381 to V415 are a coiled coil. The segment at N733–A765 is disordered. Low complexity predominate over residues N736–S763.

This is an uncharacterized protein from Plasmodium falciparum (isolate 3D7).